The primary structure comprises 576 residues: Protein O-linked-mannose beta-1,4-N-acetylglucosaminyltransferase 2 (576 aa).

Residues 1 to 4 (MNIS) are Cytoplasmic-facing. A helical; Signal-anchor for type II membrane protein membrane pass occupies residues 5 to 25 (AVFNALLVSIMAAVLWKHVKL). Topologically, residues 26–576 (LEQFYVIEEE…PFAEVLVCNT (551 aa)) are lumenal. 6 N-linked (GlcNAc...) asparagine glycosylation sites follow: Asn98, Asn275, Asn335, Asn451, Asn539, and Asn561. Residues 482–576 (RESKCQASAQ…PFAEVLVCNT (95 aa)) form the Fibronectin type-III domain.

This sequence belongs to the glycosyltransferase 61 family.

Its subcellular location is the endoplasmic reticulum membrane. It catalyses the reaction 3-O-(alpha-D-mannosyl)-L-threonyl-[protein] + UDP-N-acetyl-alpha-D-glucosamine = 3-O-(N-acetyl-beta-D-glucosaminyl-(1-&gt;4)-alpha-D-mannosyl)-L-threonyl-[protein] + UDP + H(+). It functions in the pathway protein modification; protein glycosylation. O-linked mannose beta-1,4-N-acetylglucosaminyltransferase that transfers UDP-N-acetyl-D-glucosamine to the 4-position of the mannose to generate N-acetyl-D-glucosamine-beta-1,4-O-D-mannosylprotein. Involved in the biosynthesis of the phosphorylated O-mannosyl trisaccharide (N-acetylgalactosamine-beta-3-N-acetylglucosamine-beta-4-(phosphate-6-)mannose), a carbohydrate structure present in alpha-dystroglycan (DAG1), which is required for binding laminin G-like domain-containing extracellular proteins with high affinity. The sequence is that of Protein O-linked-mannose beta-1,4-N-acetylglucosaminyltransferase 2 (pomgnt2) from Xenopus tropicalis (Western clawed frog).